A 440-amino-acid polypeptide reads, in one-letter code: Transposon Ty1-LR4 Gag polyprotein (440 aa).

Composition is skewed to polar residues over residues 1–10 (MESQQLSQHP), 48–60 (TKAN…TPAS), and 127–152 (QSQF…GNTF). 3 disordered regions span residues 1–93 (MESQ…MMTQ), 126–173 (PQSQ…RPPP), and 352–440 (GSRN…PGTY). Low complexity predominate over residues 153–165 (TDSSSADSDMTST). The tract at residues 299–401 (NNGIHINNKV…NSKSKTARAH (103 aa)) is RNA-binding. Over residues 402-418 (NVSTSNNSPSTDNDSIS) the composition is skewed to low complexity. S416 is modified (phosphoserine). Over residues 419–428 (KSTTEPIQLN) the composition is skewed to polar residues. A compositionally biased stretch (basic and acidic residues) spans 429–440 (NKHDLHLRPGTY).

As to quaternary structure, homotrimer.

It localises to the cytoplasm. Capsid protein (CA) is the structural component of the virus-like particle (VLP), forming the shell that encapsulates the retrotransposons dimeric RNA genome. The particles are assembled from trimer-clustered units and there are holes in the capsid shells that allow for the diffusion of macromolecules. CA also has nucleocapsid-like chaperone activity, promoting primer tRNA(i)-Met annealing to the multipartite primer-binding site (PBS), dimerization of Ty1 RNA and initiation of reverse transcription. The sequence is that of Transposon Ty1-LR4 Gag polyprotein (TY1A-LR4) from Saccharomyces cerevisiae (strain ATCC 204508 / S288c) (Baker's yeast).